We begin with the raw amino-acid sequence, 236 residues long: Activating transcription factor of chaperone (236 aa).

The segment at 117–185 (HRASQLASPQ…KNAATRYRQK (69 aa)) is disordered. The span at 120–137 (SQLASPQHSSSSANASPR) shows a compositional bias: low complexity. The segment covering 162-175 (RPVDDRRSRKKEQN) has biased composition (basic and acidic residues). Residues 165-228 (DDRRSRKKEQ…RYLKALMRDL (64 aa)) form the bZIP domain. Residues 167–187 (RRSRKKEQNKNAATRYRQKKK) form a basic motif region. Positions 193–228 (LLKEEQTLRQRHTELGEKCSDLQREIRYLKALMRDL) are leucine-zipper.

It belongs to the bZIP family. As to quaternary structure, binds DNA as a dimer.

Its subcellular location is the nucleus. Transcriptional activator that acts in the unfolded protein response (UPR) pathway. Acts during endoplasmic reticulum (ER) stress by activating UPR target genes via direct binding to the UPR element (UPRE) (5'-GGAACTGGACAGCGTGTCGAAA-3'). Activates expression of ER chaperones ERP72 and PDI. This Bombyx mori (Silk moth) protein is Activating transcription factor of chaperone.